Here is a 342-residue protein sequence, read N- to C-terminus: Dihydroorotate dehydrogenase (quinone) (342 aa).

Residues Ala-61–Lys-65 and Thr-85 contribute to the FMN site. Lys-65 lines the substrate pocket. Residue Asn-110–Phe-114 coordinates substrate. Residues Asn-138 and Asn-171 each coordinate FMN. Residue Asn-171 participates in substrate binding. Ser-174 serves as the catalytic Nucleophile. Asn-176 lines the substrate pocket. 2 residues coordinate FMN: Lys-216 and Thr-244. Asn-245–Thr-246 provides a ligand contact to substrate. FMN is bound by residues Gly-267, Gly-296, and Tyr-317–Ser-318.

Belongs to the dihydroorotate dehydrogenase family. Type 2 subfamily. In terms of assembly, monomer. FMN is required as a cofactor.

It localises to the cell membrane. It carries out the reaction (S)-dihydroorotate + a quinone = orotate + a quinol. The protein operates within pyrimidine metabolism; UMP biosynthesis via de novo pathway; orotate from (S)-dihydroorotate (quinone route): step 1/1. Functionally, catalyzes the conversion of dihydroorotate to orotate with quinone as electron acceptor. This Pseudomonas aeruginosa (strain UCBPP-PA14) protein is Dihydroorotate dehydrogenase (quinone).